A 156-amino-acid polypeptide reads, in one-letter code: Protein CROC-4 (156 aa).

The disordered stretch occupies residues 46–71 (RATSSTTDSSRAPSSPRPPGSTSHCG). Low complexity predominate over residues 48–59 (TSSTTDSSRAPS).

In terms of tissue distribution, expressed throughout the brain in the thalamus, subthalamic nucleus, corpus callosum, hippocampus, substantia nigra, caudate nucleus, and amygdala.

It localises to the nucleus. May play a role in FOS signaling pathways involved in development and remodeling of neurons. Promotes transcription of the FOS promoter. This Homo sapiens (Human) protein is Protein CROC-4.